The primary structure comprises 362 residues: Ferredoxin--NADP reductase, leaf isozyme 1, chloroplastic (362 aa).

A chloroplast-targeting transit peptide spans Met-1–Arg-36. Residues Lys-83–Met-205 enclose the FAD-binding FR-type domain. FAD contacts are provided by residues Arg-141–Ser-144, Cys-162–Lys-164, Tyr-168, Val-179–Ser-181, and Thr-220. NADP(+) contacts are provided by Ser-144 and Lys-164. The cysteines at positions 180 and 185 are disulfide-linked. At Ser-181 the chain carries Phosphoserine. NADP(+) contacts are provided by residues Thr-220, Val-252–Pro-253, Ser-282–Arg-283, Lys-292, Gly-321–Leu-322, and Glu-360.

The protein belongs to the ferredoxin--NADP reductase type 1 family. Heterodimer with LFNR2. Component of high molecular weight thylakoid LFNRs-containing protein complexes containing LIR1, LFNR1, LFNR2, TIC62 and TROL proteins. Interacts directly with LFNR1 and LFNR2; LIR1 increases the affinity of LFNR1 and LFNR2 for TIC62 and subsequent thylakoid relocalization. FAD serves as cofactor. Post-translationally, may form interchain disulfide bonds with LIR1.

Its subcellular location is the plastid. It localises to the chloroplast stroma. The protein resides in the chloroplast thylakoid membrane. It carries out the reaction 2 reduced [2Fe-2S]-[ferredoxin] + NADP(+) + H(+) = 2 oxidized [2Fe-2S]-[ferredoxin] + NADPH. It participates in energy metabolism; photosynthesis. In terms of biological role, plays a key role in regulating the relative amounts of cyclic and non-cyclic electron flow to meet the demands of the plant for ATP and reducing power. The polypeptide is Ferredoxin--NADP reductase, leaf isozyme 1, chloroplastic (Oryza sativa subsp. indica (Rice)).